Here is a 162-residue protein sequence, read N- to C-terminus: Caveolin-2 (162 aa).

Topologically, residues 1–86 are cytoplasmic; sequence MGLETEKADV…FEISKYIIYK (86 aa). A Phosphotyrosine; by SRC modification is found at tyrosine 19. Phosphoserine is present on residues serine 20 and serine 23. At tyrosine 27 the chain carries Phosphotyrosine; by SRC. Positions 87 to 107 form an intramembrane region, helical; the sequence is FLTVFLAIPLAFAAGILFATL. Over 108–162 the chain is Cytoplasmic; that stretch reads SCLHIWITMPFVKTCLMVLPSVQTIWKSVTDVAIAPLCTSVGRSFSSVSLQLSHD.

It belongs to the caveolin family. As to quaternary structure, monomer or homodimer. Interacts with CAV1; the interaction forms a stable heterooligomeric complex that is required for targeting to lipid rafts and for caveolae formation. Tyrosine phosphorylated forms do not form heterooligomers with the Tyr-19-phosphorylated form existing as a monomer or dimer, and the Tyr-27-form as a monomer only. Interacts (tyrosine phosphorylated form) with the SH2 domain-containing proteins, RASA1, NCK1 and SRC. Interacts (tyrosine phosphorylated form) with INSR, the interaction (Tyr-27-phosphorylated form) is increased on insulin stimulation. Interacts (Tyr-19 phosphorylated form) with MAPK1 (phosphorylated form); the interaction, promoted by insulin, leads to nuclear location and MAPK1 activation. Interacts with STAT3; the interaction is increased on insulin-induced tyrosine phosphorylation leading to STAT activation. Phosphorylated on serine and tyrosine residues. CAV1 promotes phosphorylation on Ser-23 which then targets the complex to the plasma membrane, lipid rafts and caveolae. Phosphorylation on both Tyr-19 and Tyr-27 is required for insulin-induced 'Ser-727' phosphorylation of STAT3 and its activation. Phosphorylation on Tyr-19 is required for insulin-induced phosphorylation of MAPK1 and DNA binding of STAT3. Tyrosine phosphorylation is induced by both EGF and insulin.

It is found in the nucleus. The protein resides in the cytoplasm. Its subcellular location is the golgi apparatus membrane. The protein localises to the cell membrane. It localises to the membrane. It is found in the caveola. In terms of biological role, may act as a scaffolding protein within caveolar membranes. Interacts directly with G-protein alpha subunits and can functionally regulate their activity. Acts as an accessory protein in conjunction with CAV1 in targeting to lipid rafts and driving caveolae formation. Positive regulator of cellular mitogenesis of the MAPK signaling pathway. Required for the insulin-stimulated nuclear translocation and activation of MAPK1 and STAT3, and the subsequent regulation of cell cycle progression. This Dasypus novemcinctus (Nine-banded armadillo) protein is Caveolin-2 (CAV2).